The primary structure comprises 293 residues: 33 kDa chaperonin (293 aa).

Intrachain disulfides connect Cys-239/Cys-241 and Cys-272/Cys-275.

It belongs to the HSP33 family. Post-translationally, under oxidizing conditions two disulfide bonds are formed involving the reactive cysteines. Under reducing conditions zinc is bound to the reactive cysteines and the protein is inactive.

The protein localises to the cytoplasm. Functionally, redox regulated molecular chaperone. Protects both thermally unfolding and oxidatively damaged proteins from irreversible aggregation. Plays an important role in the bacterial defense system toward oxidative stress. The polypeptide is 33 kDa chaperonin (Limosilactobacillus fermentum (strain NBRC 3956 / LMG 18251) (Lactobacillus fermentum)).